We begin with the raw amino-acid sequence, 276 residues long: Putative phosphoenolpyruvate synthase regulatory protein (276 aa).

An ADP-binding site is contributed by 156-163; sequence GVSRSGKT.

The protein belongs to the pyruvate, phosphate/water dikinase regulatory protein family. PSRP subfamily.

The catalysed reaction is [pyruvate, water dikinase] + ADP = [pyruvate, water dikinase]-phosphate + AMP + H(+). It carries out the reaction [pyruvate, water dikinase]-phosphate + phosphate + H(+) = [pyruvate, water dikinase] + diphosphate. Functionally, bifunctional serine/threonine kinase and phosphorylase involved in the regulation of the phosphoenolpyruvate synthase (PEPS) by catalyzing its phosphorylation/dephosphorylation. This is Putative phosphoenolpyruvate synthase regulatory protein from Acidovorax ebreus (strain TPSY) (Diaphorobacter sp. (strain TPSY)).